The following is a 356-amino-acid chain: Staphylococcal superantigen-like 3 (356 aa).

The first 30 residues, 1–30 (MKMRTIAKTSLALGLLTTGAITVTTQSVKA), serve as a signal peptide directing secretion. Residues 61–165 (ATTQAANTRQ…TIKQAQTDMT (105 aa)) are disordered. Residues 69 to 104 (RQERTPKLEKAPNTNEEKTSASKIEKISQPKQEEQK) are compositionally biased toward basic and acidic residues. A compositionally biased stretch (low complexity) spans 114 to 141 (PKQEQSQTTTESTTPKTKVTTPPSTNTP). Positions 142 to 164 (QPMQSTKSDTPQSPTIKQAQTDM) are enriched in polar residues. The segment at 228-326 (IDVFIVLEDN…VIKMKNGGKY (99 aa)) is sialyl Lewis X-binding.

Belongs to the staphylococcal/streptococcal toxin family. In terms of assembly, interacts with host TLR2 (via its extracellular domain).

The protein resides in the secreted. Its function is as follows. Secreted protein that plays an essential role in immune innate response inhibition by interacting with and inhibiting host TLR2. In turn, bacteria recognition by immune cells is impaired and cytokine production is inhibited. Mechanistically, by interacting with TLR2, blocks ligand binding and thus inhibits activation. Second, by interacting with an already formed TLR2-lipopeptide complex, prevents TLR heterodimerization and downstream signaling. The interaction with host TLR2 does not involve sialyl Lewis X interactions. The polypeptide is Staphylococcal superantigen-like 3 (Staphylococcus aureus (strain NCTC 8325 / PS 47)).